We begin with the raw amino-acid sequence, 502 residues long: Nucleoside transporter 2 (502 aa).

The Cytoplasmic portion of the chain corresponds to 1 to 30 (MTTSSDSAMVNHTPSPWYKFGFKSFAEFNT). A helical transmembrane segment spans residues 31–51 (YVTFVFLGMSIMMVASAVTSA). The Extracellular segment spans residues 52–81 (PDFLTRYYVYATGDPDAVAETPLFWNNANT). Residues 82–102 (FYNAGTYVLQVLTELFSLTPF) form a helical membrane-spanning segment. Over 103-111 (MRRIPLSVR) the chain is Cytoplasmic. Residues 112–132 (LFVGLGIPFAELLLIIIVPAA) form a helical membrane-spanning segment. At 133 to 137 (TIKSQ) the chain is on the extracellular side. A helical membrane pass occupies residues 138–158 (HGAIAVIMVVACVGGFSKALC). Residues 159–178 (DSCTNALVGPFPTKFMNGAQ) lie on the Cytoplasmic side of the membrane. Residues 179–199 (WGLTVIALLMSIIQIILKVSM) form a helical membrane-spanning segment. Topologically, residues 200–210 (GTSFHDILTMS) are extracellular. A helical membrane pass occupies residues 211 to 231 (RIYFGICIGIQLFAIFELAIL). Residues 232 to 352 (RFNPFAQKYI…SVFKRVYPML (121 aa)) lie on the Cytoplasmic side of the membrane. A disordered region spans residues 252–273 (AQNNESTLEETAPSMNEPAAGD). A helical membrane pass occupies residues 353-373 (VCVFLIYFTSLLTFPGVFFLV). The Extracellular segment spans residues 374-380 (STTSGWY). A helical transmembrane segment spans residues 381-401 (MTVIVTLFNAGDFISRMVLMF). Topologically, residues 402-408 (RPLRPSP) are cytoplasmic. A helical membrane pass occupies residues 409 to 429 (KVVVAGTLGRLIIIPFLVLCV). At 430 to 436 (RGIIRGE) the chain is on the extracellular side. The chain crosses the membrane as a helical span at residues 437 to 457 (ALPYVLITLLGLTNGYFGCMA). The Cytoplasmic segment spans residues 458-477 (CIHCPRTTTLRYAGERSLAA). A helical transmembrane segment spans residues 478 to 498 (MLSGISIMLGLCFGSNLSLAI). The Extracellular segment spans residues 499 to 502 (TLTH).

The protein belongs to the SLC29A/ENT transporter (TC 2.A.57) family.

Its subcellular location is the cell membrane. The enzyme catalyses inosine(in) = inosine(out). It carries out the reaction guanosine(in) = guanosine(out). Functionally, high affinity transporter for inosine and guanosine. The polypeptide is Nucleoside transporter 2 (Crithidia fasciculata).